The chain runs to 340 residues: Ferrochelatase (340 aa).

Positions 189 and 292 each coordinate Fe cation.

It belongs to the ferrochelatase family.

Its subcellular location is the cytoplasm. The enzyme catalyses heme b + 2 H(+) = protoporphyrin IX + Fe(2+). The protein operates within porphyrin-containing compound metabolism; protoheme biosynthesis; protoheme from protoporphyrin-IX: step 1/1. Its function is as follows. Catalyzes the ferrous insertion into protoporphyrin IX. This chain is Ferrochelatase, found in Pseudomonas aeruginosa (strain LESB58).